A 655-amino-acid polypeptide reads, in one-letter code: ATP-dependent zinc metalloprotease FtsH (655 aa).

Residues Met-1–Lys-17 are Cytoplasmic-facing. The helical transmembrane segment at Arg-18–Leu-38 threads the bilayer. Residues Arg-39–Leu-124 are Lumenal-facing. The chain crosses the membrane as a helical span at residues Pro-125 to Ile-145. At Asn-146–Asn-655 the chain is on the cytoplasmic side. Gly-216–Thr-223 is an ATP binding site. His-440 contributes to the Zn(2+) binding site. Glu-441 is a catalytic residue. Residues His-444 and Asp-517 each contribute to the Zn(2+) site.

The protein in the central section; belongs to the AAA ATPase family. It in the C-terminal section; belongs to the peptidase M41 family. Homohexamer. Zn(2+) serves as cofactor.

The protein localises to the cellular thylakoid membrane. Functionally, acts as a processive, ATP-dependent zinc metallopeptidase for both cytoplasmic and membrane proteins. Plays a role in the quality control of integral membrane proteins. This chain is ATP-dependent zinc metalloprotease FtsH, found in Acaryochloris marina (strain MBIC 11017).